The chain runs to 160 residues: CXXC motif containing zinc binding protein (160 aa).

Zn(2+) contacts are provided by cysteine 33, cysteine 36, cysteine 67, and cysteine 70. Serine 75 is subject to Phosphoserine.

It belongs to the UPF0587 family. In terms of assembly, monomer.

The polypeptide is CXXC motif containing zinc binding protein (CZIB) (Bos taurus (Bovine)).